Reading from the N-terminus, the 347-residue chain is Two pore potassium channel a (347 aa).

Positions 1 to 11 are enriched in polar residues; the sequence is MDDNSIQQSLL. The interval 1 to 49 is disordered; that stretch reads MDDNSIQQSLLADNPNVLQRKPSEGVNRFRRCRSTPSTDPLQGPPEKGS. The Cytoplasmic portion of the chain corresponds to 1–65; sequence MDDNSIQQSL…LFKEMRPSFR (65 aa). Residues 66 to 86 traverse the membrane as a helical segment; it reads LVGLLLFIYLLVGVLAFYAVM. The pore-forming intramembrane region spans 99–118; the sequence is DALYFCVVTMTTVGYGDLVP. The chain crosses the membrane as a helical span at residues 125–145; it reads LLACAFVFMGMAVVALFVSKV. Topologically, residues 146–183 are cytoplasmic; sequence ADYLVEKQEVLFFKALHTNLKGGETKMLRAIETNRIKY. The helical transmembrane segment at 184-204 threads the bilayer; it reads KFYTNALLLVLSIISGTVFLW. Positions 213–232 form an intramembrane region, pore-forming; it reads DSFYCVCATITTLGYGDKSF. The chain crosses the membrane as a helical span at residues 239 to 259; the sequence is VFAVFWIITSTIIMAQFFMYL. The Cytoplasmic portion of the chain corresponds to 260-347; it reads AEIYTERRQK…YDLTLAQSAQ (88 aa). EF-hand domains are found at residues 276 to 311 and 315 to 347; these read LTRK…ELGK and EEIS…QSAQ. Ca(2+) is bound by residues aspartate 289, aspartate 291, aspartate 293, glutamine 295, glutamate 300, aspartate 328, aspartate 330, serine 332, threonine 334, and aspartate 339.

Belongs to the two pore domain potassium channel (TC 1.A.1.7) family. In terms of assembly, homodimer.

The protein localises to the vacuole membrane. Functionally, highly selective inward-rectifying potassium channel that is specifically located in the tonoplast of large vacuoles. Functions independently of the voltage difference across the membrane. The polypeptide is Two pore potassium channel a (TPKA) (Oryza sativa subsp. japonica (Rice)).